The following is a 398-amino-acid chain: Succinate--CoA ligase [ADP-forming] subunit beta (398 aa).

The 245-residue stretch at 9-253 (KEILASYGVR…IREENPIEVE (245 aa)) folds into the ATP-grasp domain. Residues Lys50, 57 to 59 (GRG), Val106, and Glu116 contribute to the ATP site. Positions 208 and 222 each coordinate Mg(2+). Substrate-binding positions include Asn273 and 330–332 (GIV).

Belongs to the succinate/malate CoA ligase beta subunit family. As to quaternary structure, heterotetramer of two alpha and two beta subunits. It depends on Mg(2+) as a cofactor.

The enzyme catalyses succinate + ATP + CoA = succinyl-CoA + ADP + phosphate. The catalysed reaction is GTP + succinate + CoA = succinyl-CoA + GDP + phosphate. Its pathway is carbohydrate metabolism; tricarboxylic acid cycle; succinate from succinyl-CoA (ligase route): step 1/1. In terms of biological role, succinyl-CoA synthetase functions in the citric acid cycle (TCA), coupling the hydrolysis of succinyl-CoA to the synthesis of either ATP or GTP and thus represents the only step of substrate-level phosphorylation in the TCA. The beta subunit provides nucleotide specificity of the enzyme and binds the substrate succinate, while the binding sites for coenzyme A and phosphate are found in the alpha subunit. The chain is Succinate--CoA ligase [ADP-forming] subunit beta from Flavobacterium psychrophilum (strain ATCC 49511 / DSM 21280 / CIP 103535 / JIP02/86).